We begin with the raw amino-acid sequence, 553 residues long: MGSRSSTRIPVPLMLTVRIMLALSCVCPTSSLDGRPLAAAGIVVTGDKAVNIYTSSQTGSIIIKLLPNMPKDKEACAKAPLEAYNRTLTTLLTPLGDSIRRIQESVTTSGGGKQGRLIGAIIGGVALGVATAAQITAASALIQANQNAANILRLKESIAATNEAVHEVTDGLSQLAVAVGKMQQFVNDQFNKTAQELDCIKITQQVGVELNLYLTELTTVFGPQITSPALTQLTIQALYNLAGGNMDYLLTKLGVGNNQLSSLIGSGLITGNPILYDSQTQLLGIQVTLPSVGNLNNMRATYLETLSVSTTKGFASALVPKVVTQVGSVIEELDTSYCIETDLDLYCTRIVTFPMSPGIYSCLSGNTSACMYSKTEGALTTPYMTLKGSVIANCKMTTCRCADPPGIISQNYGEAVSLIDRQSCNILSLDGITLRLSGEFDATYQKNISIQDSQVIVTGNLDISTELGNVNNSISNALDKLEESNSKLDKVNVKLTSTSALITYIFLTVISLVCGILSLVLACYLMYKQKAQQKTLLWLGNNTLDQMRATTKM.

The first 31 residues, 1 to 31, serve as a signal peptide directing secretion; sequence MGSRSSTRIPVPLMLTVRIMLALSCVCPTSS. Topologically, residues 32–500 are extracellular; that stretch reads LDGRPLAAAG…VNVKLTSTSA (469 aa). Cystine bridges form between Cys-76/Cys-199, Cys-338/Cys-347, Cys-362/Cys-370, Cys-394/Cys-399, and Cys-401/Cys-424. Asn-85 is a glycosylation site (N-linked (GlcNAc...) asparagine; by host). The fusion peptide stretch occupies residues 117 to 141; that stretch reads LIGAIIGGVALGVATAAQITAASAL. A coiled-coil region spans residues 142-170; it reads IQANQNAANILRLKESIAATNEAVHEVTD. An N-linked (GlcNAc...) asparagine; by host glycan is attached at Asn-191. Residue Asn-366 is glycosylated (N-linked (GlcNAc...) asparagine; by host). 2 N-linked (GlcNAc...) asparagine; by host glycosylation sites follow: Asn-447 and Asn-471. Positions 466–491 form a coiled coil; that stretch reads ELGNVNNSISNALDKLEESNSKLDKV. Residues 501–521 traverse the membrane as a helical segment; that stretch reads LITYIFLTVISLVCGILSLVL. At 522–553 the chain is on the cytoplasmic side; that stretch reads ACYLMYKQKAQQKTLLWLGNNTLDQMRATTKM. Cys-523 carries the S-palmitoyl cysteine; by host lipid modification.

This sequence belongs to the paramyxoviruses fusion glycoprotein family. As to quaternary structure, homotrimer of disulfide-linked F1-F2. In terms of processing, the inactive precursor F0 is glycosylated and proteolytically cleaved into F1 and F2 to be functionally active. The cleavage is mediated by cellular proteases during the transport and maturation of the polypeptide.

The protein resides in the virion membrane. The protein localises to the host cell membrane. Its function is as follows. Class I viral fusion protein. Under the current model, the protein has at least 3 conformational states: pre-fusion native state, pre-hairpin intermediate state, and post-fusion hairpin state. During viral and plasma cell membrane fusion, the heptad repeat (HR) regions assume a trimer-of-hairpins structure, positioning the fusion peptide in close proximity to the C-terminal region of the ectodomain. The formation of this structure appears to drive apposition and subsequent fusion of viral and plasma cell membranes. Directs fusion of viral and cellular membranes leading to delivery of the nucleocapsid into the cytoplasm. This fusion is pH independent and occurs directly at the outer cell membrane. The trimer of F1-F2 (F protein) probably interacts with HN at the virion surface. Upon HN binding to its cellular receptor, the hydrophobic fusion peptide is unmasked and interacts with the cellular membrane, inducing the fusion between cell and virion membranes. Later in infection, F proteins expressed at the plasma membrane of infected cells could mediate fusion with adjacent cells to form syncytia, a cytopathic effect that could lead to tissue necrosis. This chain is Fusion glycoprotein F0 (F), found in Newcastle disease virus (strain D26/76) (NDV).